A 1502-amino-acid chain; its full sequence is Clustered mitochondria protein homolog (1502 aa).

6 disordered regions span residues M1–D62, A571–M615, A755–R799, K1054–V1085, A1381–G1403, and G1429–R1502. Residues A7–L35 are compositionally biased toward low complexity. Residues K53–D62 show a composition bias toward basic and acidic residues. The Clu domain occupies E399 to L693. The span at T575 to E586 shows a compositional bias: acidic residues. The span at G587–S606 shows a compositional bias: basic and acidic residues. Residues E781–A792 are compositionally biased toward low complexity. Residues K1054–S1069 are compositionally biased toward basic and acidic residues. Low complexity predominate over residues G1429 to G1451. Positions R1462 to V1471 are enriched in basic and acidic residues. Residues K1486 to R1502 are compositionally biased toward basic residues.

It belongs to the CLU family. As to quaternary structure, may associate with the eukaryotic translation initiation factor 3 (eIF-3) complex.

The protein resides in the cytoplasm. Its function is as follows. mRNA-binding protein involved in proper cytoplasmic distribution of mitochondria. The chain is Clustered mitochondria protein homolog from Cryptococcus neoformans var. neoformans serotype D (strain B-3501A) (Filobasidiella neoformans).